A 99-amino-acid polypeptide reads, in one-letter code: DNA-binding protein Fis (99 aa).

Positions 75–94 (QTRAAIMMGINRGTLRKKLK) form a DNA-binding region, H-T-H motif.

The protein belongs to the transcriptional regulatory Fis family. In terms of assembly, homodimer.

Functionally, activates ribosomal RNA transcription. Plays a direct role in upstream activation of rRNA promoters. The polypeptide is DNA-binding protein Fis (Tolumonas auensis (strain DSM 9187 / NBRC 110442 / TA 4)).